Here is a 429-residue protein sequence, read N- to C-terminus: Histidinol dehydrogenase (429 aa).

Residues tyrosine 130, glutamine 191, and asparagine 214 each contribute to the NAD(+) site. Residues serine 237, glutamine 259, and histidine 262 each contribute to the substrate site. Residues glutamine 259 and histidine 262 each coordinate Zn(2+). Catalysis depends on proton acceptor residues glutamate 327 and histidine 328. Residues histidine 328, aspartate 361, glutamate 415, and histidine 420 each coordinate substrate. Zn(2+) is bound at residue aspartate 361. Residue histidine 420 coordinates Zn(2+).

Belongs to the histidinol dehydrogenase family. Zn(2+) serves as cofactor.

It catalyses the reaction L-histidinol + 2 NAD(+) + H2O = L-histidine + 2 NADH + 3 H(+). Its pathway is amino-acid biosynthesis; L-histidine biosynthesis; L-histidine from 5-phospho-alpha-D-ribose 1-diphosphate: step 9/9. Functionally, catalyzes the sequential NAD-dependent oxidations of L-histidinol to L-histidinaldehyde and then to L-histidine. This Nitrobacter winogradskyi (strain ATCC 25391 / DSM 10237 / CIP 104748 / NCIMB 11846 / Nb-255) protein is Histidinol dehydrogenase.